Consider the following 112-residue polypeptide: UPF0102 protein C8J_0145 (112 aa).

Belongs to the UPF0102 family.

The chain is UPF0102 protein C8J_0145 from Campylobacter jejuni subsp. jejuni serotype O:6 (strain 81116 / NCTC 11828).